The primary structure comprises 185 residues: TATA-box-binding protein (185 aa).

2 tandem repeats follow at residues 8 to 84 (IENI…VEML) and 99 to 175 (IQNM…LHEL).

This sequence belongs to the TBP family.

General factor that plays a role in the activation of archaeal genes transcribed by RNA polymerase. Binds specifically to the TATA box promoter element which lies close to the position of transcription initiation. In Thermococcus sibiricus (strain DSM 12597 / MM 739), this protein is TATA-box-binding protein.